A 464-amino-acid chain; its full sequence is UDP-glucose:undecaprenyl-phosphate glucose-1-phosphate transferase (464 aa).

Residues 1 to 15 (MTNLKKRERAKTNAS) lie on the Cytoplasmic side of the membrane. Residues 16 to 36 (LISMVQRFSDITIMFAGLWLV) traverse the membrane as a helical segment. The Periplasmic portion of the chain corresponds to 37–38 (CE). The chain crosses the membrane as a helical span at residues 39-59 (VSGLSFLYMHLLVALITLVVF). Over 60–80 (QMLGGITDFYRSWRGVRAATE) the chain is Cytoplasmic. Residues 81–101 (FALLLQNWTLSVIFSAGLVAF) traverse the membrane as a helical segment. Residues 102–104 (NND) lie on the Periplasmic side of the membrane. The chain crosses the membrane as a helical span at residues 105-125 (FDTQLKIWLAWYALTSIGLVV). At 126 to 278 (CRSCIRIGAG…VNRLLKRAED (153 aa)) the chain is on the cytoplasmic side. The chain crosses the membrane as a helical span at residues 279–299 (IVLATLILLLISPVLCCIALA). Over 300–464 (VKLSSPGPVI…FKGFVNKAAY (165 aa)) the chain is Periplasmic.

Belongs to the bacterial sugar transferase family.

The protein localises to the cell inner membrane. It carries out the reaction di-trans,octa-cis-undecaprenyl phosphate + UDP-alpha-D-glucose = alpha-D-glucosyl di-trans,octa-cis-undecaprenyl diphosphate + UMP. Its pathway is exopolysaccharide biosynthesis; colanic acid biosynthesis. In terms of biological role, is the initiating enzyme for colanic acid (CA) synthesis. Catalyzes the transfer of the glucose-1-phosphate moiety from UDP-Glc onto the carrier lipid undecaprenyl phosphate (C55-P), forming a phosphoanhydride bond yielding to glucosyl-pyrophosphoryl-undecaprenol (Glc-PP-C55). Also possesses a weak galactose-1-P transferase activity. This chain is UDP-glucose:undecaprenyl-phosphate glucose-1-phosphate transferase (wcaJ), found in Escherichia coli (strain K12).